Here is a 367-residue protein sequence, read N- to C-terminus: Probable peptidoglycan glycosyltransferase FtsW (367 aa).

Topologically, residues 1–8 are cytoplasmic; the sequence is MRRVEGYD. The chain crosses the membrane as a helical span at residues 9-29; it reads MIVLMMAVILTCFGVVMVYSA. Residues 30–49 lie on the Periplasmic side of the membrane; sequence SSVMAAKKFHDGFFFLKRQS. Residues 50–70 traverse the membrane as a helical segment; that stretch reads LYALIGFIGMGVAMHVDYHVW. The Cytoplasmic segment spans residues 71-72; sequence KK. Residues 73-93 traverse the membrane as a helical segment; it reads WAVPLFLGTFFLLLLVFVPGI. Over 94-138 the chain is Periplasmic; it reads GGTAKGASRWIRLPGFNFQPSELAKVALIMYMAYSLEKRQDKLKQ. A helical transmembrane segment spans residues 139 to 159; sequence FMSGFFPYMLILGVFIAVLLA. Topologically, residues 160 to 161 are cytoplasmic; it reads QH. Residues 162–182 traverse the membrane as a helical segment; that stretch reads DMGAALTMLAVAIVMLFAAGT. Position 183 (K183) is a topological domain, periplasmic. The helical transmembrane segment at 184–204 threads the bilayer; sequence VQYILGMGLVALPGICYLVFT. Over 205–225 the chain is Cytoplasmic; the sequence is KAYRMRRITAFLDPWQDPTDA. Residues 226–246 form a helical membrane-spanning segment; the sequence is GFQIIQSWLALGTGGFFGQGL. Residues 247 to 266 lie on the Periplasmic side of the membrane; the sequence is GEGKQKLFYLPEAHTDFILS. A helical membrane pass occupies residues 267 to 287; that stretch reads VLGEEMGFIGVVVIASMFLLL. The Cytoplasmic segment spans residues 288-304; it reads VQRSIRVAIAAEDSFGR. The helical transmembrane segment at 305-325 threads the bilayer; that stretch reads FLAFGIAILLGLEAFVNMAVV. Residues 326–335 are Periplasmic-facing; sequence TGLLPTKGIA. Residues 336–356 form a helical membrane-spanning segment; it reads LPFLSYGGSSLIISLCSVGVL. Over 357-367 the chain is Cytoplasmic; sequence LNVSTRMRGAA.

This sequence belongs to the SEDS family. FtsW subfamily.

It localises to the cell inner membrane. It carries out the reaction [GlcNAc-(1-&gt;4)-Mur2Ac(oyl-L-Ala-gamma-D-Glu-L-Lys-D-Ala-D-Ala)](n)-di-trans,octa-cis-undecaprenyl diphosphate + beta-D-GlcNAc-(1-&gt;4)-Mur2Ac(oyl-L-Ala-gamma-D-Glu-L-Lys-D-Ala-D-Ala)-di-trans,octa-cis-undecaprenyl diphosphate = [GlcNAc-(1-&gt;4)-Mur2Ac(oyl-L-Ala-gamma-D-Glu-L-Lys-D-Ala-D-Ala)](n+1)-di-trans,octa-cis-undecaprenyl diphosphate + di-trans,octa-cis-undecaprenyl diphosphate + H(+). Its pathway is cell wall biogenesis; peptidoglycan biosynthesis. In terms of biological role, peptidoglycan polymerase that is essential for cell division. This is Probable peptidoglycan glycosyltransferase FtsW from Geobacter sp. (strain M18).